The chain runs to 386 residues: Pepsin A (386 aa).

Residues 1 to 15 (MKWLLLISLVALSEC) form the signal peptide. The propeptide at 16 to 60 (AIVKVPLVRKKSLRQNLIEHGLLNDFLKNQSPNPASKYFPQEPTV) is activation peptide. The region spanning 74–383 (YFGTIGIGTP…DRANNQVGLA (310 aa)) is the Peptidase A1 domain. Asp92 is an active-site residue. Cystine bridges form between Cys105–Cys110 and Cys266–Cys270. Residue Asp275 is part of the active site. Cys309 and Cys342 form a disulfide bridge.

This sequence belongs to the peptidase A1 family.

It localises to the secreted. The catalysed reaction is Preferential cleavage: hydrophobic, preferably aromatic, residues in P1 and P1' positions. Cleaves 1-Phe-|-Val-2, 4-Gln-|-His-5, 13-Glu-|-Ala-14, 14-Ala-|-Leu-15, 15-Leu-|-Tyr-16, 16-Tyr-|-Leu-17, 23-Gly-|-Phe-24, 24-Phe-|-Phe-25 and 25-Phe-|-Tyr-26 bonds in the B chain of insulin.. Functionally, shows particularly broad specificity; although bonds involving phenylalanine and leucine are preferred, many others are also cleaved to some extent. This Canis lupus familiaris (Dog) protein is Pepsin A (PGA).